A 420-amino-acid chain; its full sequence is MWWRDLTRLRLWLKREAIPGEGRKAAKVNAGVGEKGIYTASSRGGPPSARSKAVTVVAEGAASRSWLSMDAPELGPGLVERLEQLATCPLCGGSFEDPVLLACEHSFCRACLARRWGTPPATGTEASPTACPCCGLPCPRRSLRSNVRLAVEVRISRELREKLAEPGARAGRRRGGRIPTMGCLDLPGEDMRKTWRRFEVPTPKSSNSEDDLPEDYPVVKNMLHRLTADLTLDPGTAHRRLLISADRRSVQLAPPGTPAPPDGPKRFDQLPAVLGAQGFGAGRHCWEVETADAASCRDSSGEDEDDEESHYAVGAAGESVQRKGCVRLCPAGAVWAVEGRGGRLWALTAPEPTLLGGVEPPPRRIRVDLDWERGRVAFYDGRSLDLLYAFQAPGPLGERIFPLFCTCDPRAPLRIVPAES.

The RING-type zinc finger occupies 88–135; it reads CPLCGGSFEDPVLLACEHSFCRACLARRWGTPPATGTEASPTACPCCG. The B30.2/SPRY domain maps to 210–420; the sequence is DDLPEDYPVV…APLRIVPAES (211 aa). The tract at residues 246 to 265 is disordered; the sequence is DRRSVQLAPPGTPAPPDGPK.

It localises to the cytoplasm. The enzyme catalyses S-ubiquitinyl-[E2 ubiquitin-conjugating enzyme]-L-cysteine + [acceptor protein]-L-lysine = [E2 ubiquitin-conjugating enzyme]-L-cysteine + N(6)-ubiquitinyl-[acceptor protein]-L-lysine.. The protein operates within protein modification; protein ubiquitination. In terms of biological role, plays an inhibitory role in anti-RNA viral innate immunity by targeting the adapter DDX3X and promoting its 'Lys-48'-linked polyubiquitination. Alternatively, enhances the cGAS-STING pathway activation by promoting 'Lys-63'-linked ubiquitination of STING1, facilitating the STING1-TBK1 complex formation and STING1 activation. This is RING finger protein 39 (RNF39) from Pan troglodytes (Chimpanzee).